The chain runs to 556 residues: Energy-dependent translational throttle protein EttA (556 aa).

2 ABC transporter domains span residues 7 to 260 (YTMH…EQEQ) and 325 to 551 (IEVQ…RIKY). Residue 40–47 (GLNGAGKS) participates in ATP binding. The interval 96–140 (SEVKNALTRLDEVYALYADPDADFDKLAAEQANLEAIIQAHDGHN) is arm. The tract at residues 243 to 323 (GNYSSWLEQK…IPPGPRLGDK (81 aa)) is ptIM. Position 357–364 (357–364 (GANGAGKS)) interacts with ATP.

The protein belongs to the ABC transporter superfamily. ABCF family. Translational throttle EttA subfamily. As to quaternary structure, monomer. Probably contacts ribosomal proteins L1, L5, L33 and S7, the 16S and 23S rRNA and the P-site containing tRNA(fMet).

It is found in the cytoplasm. The enzyme catalyses ATP + H2O = ADP + phosphate + H(+). Its function is as follows. A translation factor that gates the progression of the 70S ribosomal initiation complex (IC, containing tRNA(fMet) in the P-site) into the translation elongation cycle by using a mechanism sensitive to the ATP/ADP ratio. Binds to the 70S ribosome E-site where it modulates the state of the translating ribosome during subunit translocation. ATP hydrolysis probably frees it from the ribosome, which can enter the elongation phase. The chain is Energy-dependent translational throttle protein EttA from Haemophilus influenzae (strain ATCC 51907 / DSM 11121 / KW20 / Rd).